The sequence spans 244 residues: Probable ABC transporter ATP-binding protein p29 (244 aa).

The ABC transporter domain occupies 6 to 241 (LVFDQVSLRY…KLTKQKLMQI (236 aa)). 38–45 (GKSGVGKT) provides a ligand contact to ATP.

The protein belongs to the ABC transporter superfamily.

Its function is as follows. Part of a high-affinity transport system. This is Probable ABC transporter ATP-binding protein p29 (p29) from Mycoplasma pneumoniae (strain ATCC 29342 / M129 / Subtype 1) (Mycoplasmoides pneumoniae).